The following is a 126-amino-acid chain: Holo-[acyl-carrier-protein] synthase (126 aa).

Residues Asp-8 and Glu-57 each coordinate Mg(2+).

The protein belongs to the P-Pant transferase superfamily. AcpS family. It depends on Mg(2+) as a cofactor.

It is found in the cytoplasm. The enzyme catalyses apo-[ACP] + CoA = holo-[ACP] + adenosine 3',5'-bisphosphate + H(+). Its function is as follows. Transfers the 4'-phosphopantetheine moiety from coenzyme A to a Ser of acyl-carrier-protein. This is Holo-[acyl-carrier-protein] synthase from Vibrio cholerae serotype O1 (strain ATCC 39541 / Classical Ogawa 395 / O395).